The chain runs to 377 residues: Putative F-box protein At3g13830 (377 aa).

The F-box domain occupies 6 to 52; it reads TTTMSTLPMVLVDEILSRVPITSLRSLRSTCKRWEAQSKTNLVGGKA.

The sequence is that of Putative F-box protein At3g13830 from Arabidopsis thaliana (Mouse-ear cress).